The primary structure comprises 248 residues: 2,3-bisphosphoglycerate-dependent phosphoglycerate mutase 2 (248 aa).

Substrate contacts are provided by residues 8 to 15 (RHGESAWN), 21 to 22 (TG), R60, 87 to 90 (EKHY), K98, 114 to 115 (RR), and 183 to 184 (GN). The active-site Tele-phosphohistidine intermediate is H9. E87 acts as the Proton donor/acceptor in catalysis.

Belongs to the phosphoglycerate mutase family. BPG-dependent PGAM subfamily.

It carries out the reaction (2R)-2-phosphoglycerate = (2R)-3-phosphoglycerate. It participates in carbohydrate degradation; glycolysis; pyruvate from D-glyceraldehyde 3-phosphate: step 3/5. Catalyzes the interconversion of 2-phosphoglycerate and 3-phosphoglycerate. This Bacteroides thetaiotaomicron (strain ATCC 29148 / DSM 2079 / JCM 5827 / CCUG 10774 / NCTC 10582 / VPI-5482 / E50) protein is 2,3-bisphosphoglycerate-dependent phosphoglycerate mutase 2.